A 287-amino-acid chain; its full sequence is Diphthine methyl ester synthase (287 aa).

Residues Leu-9, Asp-84, Gly-87, 112-113 (SI), Val-163, Val-221, and His-248 contribute to the S-adenosyl-L-methionine site.

The protein belongs to the diphthine synthase family.

Its subcellular location is the cytoplasm. It catalyses the reaction 2-[(3S)-amino-3-carboxypropyl]-L-histidyl-[translation elongation factor 2] + 4 S-adenosyl-L-methionine = diphthine methyl ester-[translation elongation factor 2] + 4 S-adenosyl-L-homocysteine + 3 H(+). It functions in the pathway protein modification; peptidyl-diphthamide biosynthesis. In terms of biological role, S-adenosyl-L-methionine-dependent methyltransferase that catalyzes four methylations of the modified target histidine residue in translation elongation factor 2 (EF-2), to form an intermediate called diphthine methyl ester. The four successive methylation reactions represent the second step of diphthamide biosynthesis. The sequence is that of Diphthine methyl ester synthase (DPH5) from Gibberella zeae (strain ATCC MYA-4620 / CBS 123657 / FGSC 9075 / NRRL 31084 / PH-1) (Wheat head blight fungus).